The primary structure comprises 358 residues: Thiol protease aleurain (358 aa).

Residues 1 to 21 (MSAKTILSSVVLVVLVAASAA) form the signal peptide. An interaction with VSR1 region spans residues 22-42 (ANIGFDESNPIRMVSDGLREV). The propeptide at 22 to 140 (ANIGFDESNP…KGSHKVTEAA (119 aa)) is activation peptide. A glycan (N-linked (GlcNAc...) asparagine) is linked at N125. Intrachain disulfides connect C162-C205 and C196-C238. C165 is an active-site residue. An N-linked (GlcNAc...) asparagine glycan is attached at N254. A disulfide bridge connects residues C296 and C346. Active-site residues include H305 and N325.

It belongs to the peptidase C1 family. Interacts with VSR1/BP80B. In terms of tissue distribution, expressed in leaves (at protein level).

It localises to the vacuole. The catalysed reaction is Hydrolysis of proteins, acting as an aminopeptidase (notably, cleaving Arg-|-Xaa bonds) as well as an endopeptidase.. In terms of biological role, may play a role in proteolysis leading to mobilization of nitrogen during senescence and starvation. This chain is Thiol protease aleurain, found in Arabidopsis thaliana (Mouse-ear cress).